The chain runs to 192 residues: Protein GrpE (192 aa).

Positions 1–43 (MSKEEFPHEKDLKDEVTPDKAPKKDPKAASKEEVKEDPAKDYE) are disordered.

Belongs to the GrpE family. In terms of assembly, homodimer.

It is found in the cytoplasm. In terms of biological role, participates actively in the response to hyperosmotic and heat shock by preventing the aggregation of stress-denatured proteins, in association with DnaK and GrpE. It is the nucleotide exchange factor for DnaK and may function as a thermosensor. Unfolded proteins bind initially to DnaJ; upon interaction with the DnaJ-bound protein, DnaK hydrolyzes its bound ATP, resulting in the formation of a stable complex. GrpE releases ADP from DnaK; ATP binding to DnaK triggers the release of the substrate protein, thus completing the reaction cycle. Several rounds of ATP-dependent interactions between DnaJ, DnaK and GrpE are required for fully efficient folding. This Lactobacillus gasseri (strain ATCC 33323 / DSM 20243 / BCRC 14619 / CIP 102991 / JCM 1131 / KCTC 3163 / NCIMB 11718 / NCTC 13722 / AM63) protein is Protein GrpE.